Consider the following 815-residue polypeptide: MVVVDWLGLGLGSVAGALVSEGLKVLISEAKKVLAFKSVSNELASTMESLLPVIKEIESMQDGMELQDLKDTIDKALLLVEKCSHVEKWNIILKSKYTRKVEEINRKMLKFCQVQLQLLLFRNQLKSMPSMEAILNNYFQNINKKLDRLSGSPAPPLVSKRCSVPKLDNMVLVGLDWPLVELKKKLLDNSVVVVSGPPGCGKTTLVTKLCDDPEIEGEFKKIFYSVVSNTPNFRAIVQNLLQDNGCGAITFDDDSQAETGLRDLLEELTKDGRILLVLDDVWQGSEFLLRKFQIDLPDYKILVTSQFDFTSLWPTYHLVPLKYEYARSLLIQWASPPLHTSPDEYEDLLQKILKRCNGFPLVIEVVGISLKGQALYLWKGQVESWSEGETILGNANPTVRQRLQPSFNVLKPHLKECFMDMGSFLQDQKIRASLIIDIWMELYGRGSSSTNKFMLYLNELASQNLLKLVHLGTNKREDGFYNELLVTQHNILRELAIFQSELEPIMQRKKLNLEIREDNFPDECLNQPINARLLSIYTDDLFSSKWLEMDCPNVEALVLNISSLDYALPSFIAEMKKLKVLTIANHGFYPARLSNFSCLSSLPNLKRIRFEKVSVTLLDIPQLQLGSLKKLSFFMCSFGEVFYDTEDIDVSKALSNLQEIDIDYCYDLDELPYWIPEVVSLKTLSITNCNKLSQLPEAIGNLSRLEVLRMCSCMNLSELPEATERLSNLRSLDISHCLGLRKLPQEIGKLQKLENISMRKCSGCELPDSVRYLENLEVKCDEVTGLLWERLMPEMRNLRVHTEETEHNLKLLLTF.

One can recognise an RPW8 domain in the interval 1 to 150 (MVVVDWLGLG…NINKKLDRLS (150 aa)). 2 NB-ARC domains span residues 156-283 (PLVS…DVWQ) and 341-440 (SPDE…DIWM). 196–203 (GPPGCGKT) is an ATP binding site. LRR repeat units follow at residues 656 to 678 (NLQEIDIDYCYDLDELPYWIPEV), 680 to 702 (SLKTLSITNCNKLSQLPEAIGNL), 704 to 726 (RLEVLRMCSCMNLSELPEATERL), and 728 to 750 (NLRSLDISHCLGLRKLPQEIGKL).

Belongs to the disease resistance NB-LRR family.

Functionally, probable disease resistance protein. In Arabidopsis thaliana (Mouse-ear cress), this protein is Probable disease resistance protein At5g66910.